We begin with the raw amino-acid sequence, 25 residues long: Fructokinase-1 (25 aa).

It belongs to the ROK (NagC/XylR) family. In terms of assembly, homodimer. It depends on Mg(2+) as a cofactor.

The catalysed reaction is D-fructose + ATP = D-fructose 6-phosphate + ADP + H(+). With respect to regulation, inhibition by zinc ions (Potential). Inactivated by EDTA. This chain is Fructokinase-1, found in Lactococcus lactis subsp. lactis (Streptococcus lactis).